The sequence spans 282 residues: Ribosomal RNA small subunit methyltransferase I (282 aa).

It belongs to the methyltransferase superfamily. RsmI family.

The protein resides in the cytoplasm. The enzyme catalyses cytidine(1402) in 16S rRNA + S-adenosyl-L-methionine = 2'-O-methylcytidine(1402) in 16S rRNA + S-adenosyl-L-homocysteine + H(+). Catalyzes the 2'-O-methylation of the ribose of cytidine 1402 (C1402) in 16S rRNA. The chain is Ribosomal RNA small subunit methyltransferase I from Pseudomonas aeruginosa (strain ATCC 15692 / DSM 22644 / CIP 104116 / JCM 14847 / LMG 12228 / 1C / PRS 101 / PAO1).